Reading from the N-terminus, the 337-residue chain is DNA-directed RNA polymerase subunit alpha (337 aa).

The alpha N-terminal domain (alpha-NTD) stretch occupies residues 1 to 233 (MIQKNWQELI…DQLSIFVNFE (233 aa)). Positions 249 to 337 (FNPVLLKKVD…DLAKRYEDQY (89 aa)) are alpha C-terminal domain (alpha-CTD).

The protein belongs to the RNA polymerase alpha chain family. Homodimer. The RNAP catalytic core consists of 2 alpha, 1 beta, 1 beta' and 1 omega subunit. When a sigma factor is associated with the core the holoenzyme is formed, which can initiate transcription.

The catalysed reaction is RNA(n) + a ribonucleoside 5'-triphosphate = RNA(n+1) + diphosphate. In terms of biological role, DNA-dependent RNA polymerase catalyzes the transcription of DNA into RNA using the four ribonucleoside triphosphates as substrates. The chain is DNA-directed RNA polymerase subunit alpha from Brucella canis (strain ATCC 23365 / NCTC 10854 / RM-666).